The primary structure comprises 2167 residues: Beige protein homolog 1 (2167 aa).

The region spanning 1368 to 1499 (KDNDSIATIW…VRDDVLRVLN (132 aa)) is the BEACH-type PH domain. Positions 1545–1839 (SANNSLIDGF…QIFQEPHPEK (295 aa)) constitute a BEACH domain. Residue Lys1667 forms a Glycyl lysine isopeptide (Lys-Gly) (interchain with G-Cter in ubiquitin) linkage. 5 WD repeats span residues 1927–1965 (THMAQITSFAYWKLGEFITGDKNGLIKVWKYRKDKHSVS), 1976–2015 (GHLCELKEMRCYHDYNTLLTLDISGLVYVWDMINFELVRQ), 2017–2054 (TNDAQKVAISQHAGSIMVLTKNNAISIFNLNGQIYTSK), 2072–2111 (KLDAGYRKHIYWKEMEILLVGFEDGTIEIYELFLNFHNEW), and 2129–2167 (SIKGQGKTYLSQKRRKDTAEPHEIEVIAGTLDGRLAIWY).

The protein localises to the cytoplasm. The protein resides in the membrane. May be involved in protein sorting and cell wall formation. This is Beige protein homolog 1 (BPH1) from Saccharomyces cerevisiae (strain ATCC 204508 / S288c) (Baker's yeast).